Here is a 72-residue protein sequence, read N- to C-terminus: Large ribosomal subunit protein bL31 (72 aa).

Positions 16, 18, 38, and 41 each coordinate Zn(2+).

This sequence belongs to the bacterial ribosomal protein bL31 family. Type A subfamily. In terms of assembly, part of the 50S ribosomal subunit. The cofactor is Zn(2+).

Functionally, binds the 23S rRNA. The chain is Large ribosomal subunit protein bL31 from Francisella tularensis subsp. holarctica (strain LVS).